The chain runs to 212 residues: Adenylate kinase (212 aa).

14–19 (GSGKGT) contacts ATP. The interval 34–63 (STGDLFRKKISEDSQFAAQIQNYLSSGSYV) is NMP. AMP is bound by residues Thr-35, Arg-40, 61 to 63 (SYV), 89 to 92 (GYPR), and Gln-96. Residues 126–163 (QRLFCQKCQKSYNLLLAKPKNELKCDLDSTDLITRNDD) are LID. Arg-127 provides a ligand contact to ATP. Residues Cys-130 and Cys-133 each contribute to the Zn(2+) site. Position 136-137 (136-137 (SY)) interacts with ATP. Cys-150 and Asp-153 together coordinate Zn(2+). AMP contacts are provided by Arg-160 and Arg-171. Residue Gln-199 participates in ATP binding.

This sequence belongs to the adenylate kinase family. In terms of assembly, monomer.

It localises to the cytoplasm. It catalyses the reaction AMP + ATP = 2 ADP. It participates in purine metabolism; AMP biosynthesis via salvage pathway; AMP from ADP: step 1/1. Its function is as follows. Catalyzes the reversible transfer of the terminal phosphate group between ATP and AMP. Plays an important role in cellular energy homeostasis and in adenine nucleotide metabolism. The chain is Adenylate kinase from Mesomycoplasma hyopneumoniae (strain J / ATCC 25934 / NCTC 10110) (Mycoplasma hyopneumoniae).